The sequence spans 310 residues: GMP synthase [glutamine-hydrolyzing] subunit B (310 aa).

The region spanning 2–185 (FDPKKFIDEA…LGLPDSIVYR (184 aa)) is the GMPS ATP-PPase domain. 29–35 (SGGVDSS) provides a ligand contact to ATP.

Heterodimer composed of a glutamine amidotransferase subunit (A) and a GMP-binding subunit (B).

The enzyme catalyses XMP + L-glutamine + ATP + H2O = GMP + L-glutamate + AMP + diphosphate + 2 H(+). The protein operates within purine metabolism; GMP biosynthesis; GMP from XMP (L-Gln route): step 1/1. Catalyzes the synthesis of GMP from XMP. This is GMP synthase [glutamine-hydrolyzing] subunit B (guaAB) from Methanocaldococcus jannaschii (strain ATCC 43067 / DSM 2661 / JAL-1 / JCM 10045 / NBRC 100440) (Methanococcus jannaschii).